Consider the following 55-residue polypeptide: Large ribosomal subunit protein bL33 (55 aa).

It belongs to the bacterial ribosomal protein bL33 family.

In Methylobacterium radiotolerans (strain ATCC 27329 / DSM 1819 / JCM 2831 / NBRC 15690 / NCIMB 10815 / 0-1), this protein is Large ribosomal subunit protein bL33.